The chain runs to 1243 residues: Probable phospholipid-transporting ATPase 7 (1243 aa).

Topologically, residues 1–74 are cytoplasmic; the sequence is MGRRRIRSRI…TTRYNLITFL (74 aa). Residues 75–96 form a helical membrane-spanning segment; sequence PKCLYEQFHRVANFYFLVAAIL. Topologically, residues 97-100 are extracellular; sequence SVFP. Residues 101–123 traverse the membrane as a helical segment; it reads LSPFNKWSMIAPLIFVVGLSMGK. The Cytoplasmic segment spans residues 124–305; that stretch reads EALEDWRRFM…SRIEKRMDYI (182 aa). Residues 306-327 traverse the membrane as a helical segment; that stretch reads IYTLFALLVLVSFISSLGFAVM. Topologically, residues 328–359 are extracellular; sequence TKMHMGDWWYLRPDKPERLTNPRNPFHAWVVH. The chain crosses the membrane as a helical span at residues 360-377; that stretch reads LITAVLLYGYLIPISLYV. Residues 378–941 are Cytoplasmic-facing; the sequence is SIELVKVLQA…HGHWCYKRIA (564 aa). The active-site 4-aspartylphosphate intermediate is Asp-425. A Glycyl lysine isopeptide (Lys-Gly) (interchain with G-Cter in ubiquitin) cross-link involves residue Lys-623. The Mg(2+) site is built by Asp-886 and Asp-890. Residues 942 to 961 form a helical membrane-spanning segment; it reads QMICYFFYKNITFGLTLFYF. The Extracellular segment spans residues 962-975; sequence EAFTGFSGQAIYND. The chain crosses the membrane as a helical span at residues 976–995; the sequence is SYLLLFNVILTSLPVIALGV. At 996 to 1025 the chain is on the cytoplasmic side; it reads FEQDVSSEVCLQFPALYQQGPKNLFFDWYR. The chain crosses the membrane as a helical span at residues 1026–1048; the sequence is IIGWMANGVYASVVIFSLNIGIF. Residues 1049–1061 are Extracellular-facing; it reads HVQSFCSGGQTAD. The chain crosses the membrane as a helical span at residues 1062 to 1084; it reads MDAMGTAMFTCIIWAVNVQIALT. The Cytoplasmic segment spans residues 1085–1090; the sequence is MSHFTW. A helical membrane pass occupies residues 1091-1111; it reads IQHVLIWGSIVTWYIFLALFG. Topologically, residues 1112 to 1128 are extracellular; it reads MLPPKVSGNIFHMLSET. Residues 1129-1153 form a helical membrane-spanning segment; it reads LAPAPIFWLTSLLVIAATTLPYLAY. Topologically, residues 1154 to 1243 are cytoplasmic; sequence ISFQRSLNPL…TDTTSTTQHS (90 aa).

Belongs to the cation transport ATPase (P-type) (TC 3.A.3) family. Type IV subfamily.

The protein localises to the cell membrane. It is found in the endomembrane system. The enzyme catalyses ATP + H2O + phospholipidSide 1 = ADP + phosphate + phospholipidSide 2.. Involved in transport of phospholipids and in regulation of pollen plasma membrane lipid asymmetry. This chain is Probable phospholipid-transporting ATPase 7, found in Arabidopsis thaliana (Mouse-ear cress).